A 281-amino-acid chain; its full sequence is MAFHMATRYAHSPEDIKHFDTTKLRQEFLMEKIFNAGDILLTYTYNDRMIFGGVVPTESSLEIKLSKELGVDFFLQCRELGVINIGGPGSIIVDGDKAAMVKQDGYYIGMGTKQVVFASDNPANPAKFYVVSTPAHKTYPNKKLPFANALAKPMGDQQHLNKRTIYKYIDASQMATCQLQMGYTVLEPGSSWNTMPAHTHARRMETYMYFDFAEPDTRVLHLLGESTETRHIALFNEQAVVNPSWSIHCGVGTTNYAFIWAMCGENQTYDDMDQVPMNELR.

The Zn(2+) site is built by His198, His200, Glu205, and His248.

Belongs to the KduI family. The cofactor is Zn(2+).

The enzyme catalyses 5-dehydro-4-deoxy-D-glucuronate = 3-deoxy-D-glycero-2,5-hexodiulosonate. It participates in glycan metabolism; pectin degradation; 2-dehydro-3-deoxy-D-gluconate from pectin: step 4/5. Catalyzes the isomerization of 5-dehydro-4-deoxy-D-glucuronate to 3-deoxy-D-glycero-2,5-hexodiulosonate. The chain is 4-deoxy-L-threo-5-hexosulose-uronate ketol-isomerase from Lacticaseibacillus casei (strain BL23) (Lactobacillus casei).